A 238-amino-acid polypeptide reads, in one-letter code: MGRKWANIVAKKTAKDGANSKIYAKFGVEIYVAAKQGEPDPESNSALKFVLERAKQAQVPKHVIDKAIDKAKGNTDETFVEGRYEGFGPNGSMIIVDTLTSNVNRTAANVRTAFGKNGGNMGASGSVSYMFDKKGVIVFAGEDADAIFEQLLEADVDVEDVEAEDGTITVYTEPTDLHKALEALRANGQEEFQVTELEMIPQTEVTLEGEDLETFKGLIDALEADDDVQKVYHNVADM.

It belongs to the TACO1 family. YeeN subfamily.

It is found in the cytoplasm. The protein is Probable transcriptional regulatory protein STER_0242 of Streptococcus thermophilus (strain ATCC BAA-491 / LMD-9).